The primary structure comprises 135 residues: Protein KRTCAP2 homolog (135 aa).

4 helical membrane-spanning segments follow: residues 1–21 (MAVS…LLFA), 35–55 (PMAI…LTAI), 69–89 (TKLI…SGMV), and 93–113 (CITT…RISI).

The protein belongs to the KRTCAP2 family. Component of the oligosaccharyltransferase (OST) complex.

It is found in the membrane. Subunit of the oligosaccharyl transferase (OST) complex that catalyzes the initial transfer of a defined glycan (Glc(3)Man(9)GlcNAc(2) in eukaryotes) from the lipid carrier dolichol-pyrophosphate to an asparagine residue within an Asn-X-Ser/Thr consensus motif in nascent polypeptide chains, the first step in protein N-glycosylation. N-glycosylation occurs cotranslationally and the complex associates with the Sec61 complex at the channel-forming translocon complex that mediates protein translocation across the endoplasmic reticulum (ER). All subunits are required for a maximal enzyme activity. This is Protein KRTCAP2 homolog from Ixodes scapularis (Black-legged tick).